The following is a 123-amino-acid chain: Non-specific lipid-transfer protein (123 aa).

The first 25 residues, 1 to 25 (MAVKKMVEAVFVVGLVVTMMNVWGA), serve as a signal peptide directing secretion. 4 disulfides stabilise this stretch: Cys34-Cys82, Cys44-Cys59, Cys60-Cys104, and Cys80-Cys119.

Belongs to the plant LTP family.

Plant non-specific lipid-transfer proteins transfer phospholipids as well as galactolipids across membranes. May play a role in wax or cutin deposition in the cell walls of expanding epidermal cells and certain secretory tissues. The protein is Non-specific lipid-transfer protein of Pinus taeda (Loblolly pine).